The following is a 326-amino-acid chain: MRALPTLDSLARTRPSLGDSRAAEGTLTRQPANKSAVERLAADRAKYVRSTLGSSRGPVSENRVPEAPGVQHRNPIPSTLAPAPVARRAVARKPLRPDSLVIYRQKCEFVRGSDADSSRVGLMKKFFQGSGKDKMSVTPETTRVADEYKTKETEATWTKASQAAAAKPASMLPPPAPVVAMESPALPFEVAPRVPVRRSGVELRASRSKGLQRSQSDLSSRYSTARAESDTFFQYCGLDPEVVESLGRENFSAASDCVTPKMRSVSMATSDSSFSRHSEDGLQEEELLEQVPSTTSVVERNARIIKWLFTCKKAKETPSQKLQEPA.

3 disordered regions span residues 1–37, 51–80, and 201–221; these read MRAL…KSAV, TLGS…PSTL, and VELR…LSSR. The span at 209-221 shows a compositional bias: polar residues; the sequence is KGLQRSQSDLSSR. A Phosphoserine modification is found at Ser255.

This sequence belongs to the FAM110 family. In terms of assembly, interacts with AKT1; the interaction is transient and follows AKT1 activation. Interacts with PPP2CA and alpha-tubulin.

Its subcellular location is the cytoplasm. It localises to the cytoskeleton. The protein localises to the microtubule organizing center. It is found in the centrosome. The protein resides in the spindle pole. Its subcellular location is the nucleus. May play a role in microtubule organization. May play a role in cell spreading and cell migration of epithelial cells; the function may involve the AKT1 signaling pathway. This is Protein FAM110C (Fam110c) from Rattus norvegicus (Rat).